The following is a 90-amino-acid chain: Small ribosomal subunit protein uS19 (90 aa).

The protein belongs to the universal ribosomal protein uS19 family.

Its function is as follows. Protein S19 forms a complex with S13 that binds strongly to the 16S ribosomal RNA. In Rhizorhabdus wittichii (strain DSM 6014 / CCUG 31198 / JCM 15750 / NBRC 105917 / EY 4224 / RW1) (Sphingomonas wittichii), this protein is Small ribosomal subunit protein uS19.